A 220-amino-acid polypeptide reads, in one-letter code: Guanylate kinase (220 aa).

The Guanylate kinase-like domain occupies glycine 16 to arginine 195. Serine 23 to threonine 30 is an ATP binding site.

The protein belongs to the guanylate kinase family.

Its subcellular location is the cytoplasm. The enzyme catalyses GMP + ATP = GDP + ADP. Essential for recycling GMP and indirectly, cGMP. The sequence is that of Guanylate kinase from Rhodopseudomonas palustris (strain HaA2).